We begin with the raw amino-acid sequence, 193 residues long: Probable oligoribonuclease (193 aa).

One can recognise an Exonuclease domain in the interval 15-177; sequence IIWIDCEMTG…DDIMESIAEL (163 aa). Residue tyrosine 136 is part of the active site.

The protein belongs to the oligoribonuclease family.

In terms of biological role, 3'-to-5' exoribonuclease specific for small oligoribonucleotides. In Caenorhabditis elegans, this protein is Probable oligoribonuclease.